Here is a 221-residue protein sequence, read N- to C-terminus: Lipoprotein-releasing system ATP-binding protein LolD (221 aa).

The 215-residue stretch at 6–220 folds into the ABC transporter domain; sequence LILKKISKHY…YNLKNGLLNI (215 aa). 42–49 lines the ATP pocket; sequence GSSGSGKS.

The protein belongs to the ABC transporter superfamily. Lipoprotein translocase (TC 3.A.1.125) family. The complex is composed of two ATP-binding proteins (LolD) and two transmembrane proteins (LolC and LolE).

The protein localises to the cell inner membrane. In terms of biological role, part of the ABC transporter complex LolCDE involved in the translocation of mature outer membrane-directed lipoproteins, from the inner membrane to the periplasmic chaperone, LolA. Responsible for the formation of the LolA-lipoprotein complex in an ATP-dependent manner. The polypeptide is Lipoprotein-releasing system ATP-binding protein LolD (Rickettsia typhi (strain ATCC VR-144 / Wilmington)).